The primary structure comprises 175 residues: Co-chaperone protein HscB homolog (175 aa).

Residues 7–79 (SHFDLFHLPA…LKRATYLLHL (73 aa)) form the J domain.

Belongs to the HscB family. As to quaternary structure, interacts with HscA and stimulates its ATPase activity.

Co-chaperone involved in the maturation of iron-sulfur cluster-containing proteins. Seems to help targeting proteins to be folded toward HscA. This is Co-chaperone protein HscB homolog from Burkholderia mallei (strain ATCC 23344).